The following is a 461-amino-acid chain: 3-isopropylmalate dehydratase large subunit (461 aa).

Positions 338, 398, and 401 each coordinate [4Fe-4S] cluster.

The protein belongs to the aconitase/IPM isomerase family. LeuC type 1 subfamily. In terms of assembly, heterodimer of LeuC and LeuD. [4Fe-4S] cluster is required as a cofactor.

The catalysed reaction is (2R,3S)-3-isopropylmalate = (2S)-2-isopropylmalate. It functions in the pathway amino-acid biosynthesis; L-leucine biosynthesis; L-leucine from 3-methyl-2-oxobutanoate: step 2/4. Catalyzes the isomerization between 2-isopropylmalate and 3-isopropylmalate, via the formation of 2-isopropylmaleate. The protein is 3-isopropylmalate dehydratase large subunit of Streptococcus mutans serotype c (strain ATCC 700610 / UA159).